The following is a 447-amino-acid chain: MIKIKKGLDLPIAGAPAQVIEDGKPVTQVALIGFDYNGMKPTMEVKVGDRVKCGQLLFTDKKTEGVRYTSPASGVVSAVNRGERRVFQSIVIDIEGDDSEQFAQFSPEELPNLSREQVVENLVGSGEWTALRTRPYSKAPAIDAEPHSIFVTAMDSHPLSADPAVIINEAKADFKNGLVVLGKLTRGKVFVCARAGVNYDLPSGSNAVQEQFDGPHPAGLAGTHIHYLDPVNASKFVWTIGYQDVIAIGRLFTSGRKSVERVVALAGPMVSKPRLLRTRTGASLAQLTEGELKSSDVRLISGSVLGGRNAKGNVSFLGRFANQISCLEEGYKREFMGWLSPGSNKYSLLNIYLSKLNPGKLFNFTTTTNGSERAMVPVGSYEKVMPLDILPTQLLRSLVVGDTEMAQKLGCLELDEEDLSLCTFVCPGKYEYGPILRDSLTRIEKEG.

Belongs to the NqrA family. Composed of six subunits; NqrA, NqrB, NqrC, NqrD, NqrE and NqrF.

It carries out the reaction a ubiquinone + n Na(+)(in) + NADH + H(+) = a ubiquinol + n Na(+)(out) + NAD(+). In terms of biological role, NQR complex catalyzes the reduction of ubiquinone-1 to ubiquinol by two successive reactions, coupled with the transport of Na(+) ions from the cytoplasm to the periplasm. NqrA to NqrE are probably involved in the second step, the conversion of ubisemiquinone to ubiquinol. The protein is Na(+)-translocating NADH-quinone reductase subunit A of Hahella chejuensis (strain KCTC 2396).